Here is a 433-residue protein sequence, read N- to C-terminus: Enolase (433 aa).

Glutamine 167 is a binding site for (2R)-2-phosphoglycerate. The active-site Proton donor is glutamate 209. Mg(2+) is bound by residues aspartate 246, glutamate 291, and aspartate 318. (2R)-2-phosphoglycerate contacts are provided by lysine 343, arginine 372, serine 373, and lysine 394. The active-site Proton acceptor is the lysine 343.

The protein belongs to the enolase family. Component of the RNA degradosome, a multiprotein complex involved in RNA processing and mRNA degradation. It depends on Mg(2+) as a cofactor.

The protein localises to the cytoplasm. Its subcellular location is the secreted. The protein resides in the cell surface. The enzyme catalyses (2R)-2-phosphoglycerate = phosphoenolpyruvate + H2O. It participates in carbohydrate degradation; glycolysis; pyruvate from D-glyceraldehyde 3-phosphate: step 4/5. In terms of biological role, catalyzes the reversible conversion of 2-phosphoglycerate (2-PG) into phosphoenolpyruvate (PEP). It is essential for the degradation of carbohydrates via glycolysis. In Aeromonas hydrophila subsp. hydrophila (strain ATCC 7966 / DSM 30187 / BCRC 13018 / CCUG 14551 / JCM 1027 / KCTC 2358 / NCIMB 9240 / NCTC 8049), this protein is Enolase.